Consider the following 407-residue polypeptide: P2X receptor D (407 aa).

Topologically, residues 1 to 22 (MDWDNIFSYNTAKIVTIKDRRL) are cytoplasmic. The helical transmembrane segment at 23–43 (GGLHIIFMVLIIVYIVIYSTI) threads the bilayer. Residues 44-300 (YKKGYLLTET…IQNGEIGSFN (257 aa)) lie on the Lumenal side of the membrane. Residues 283 to 296 (RHGIRLIFIQNGEI) are pore-forming motif. The chain crosses the membrane as a helical span at residues 301-321 (FQALLLTFVSGLGLLAISTVL). Residues 322–407 (VDQLAIRFLP…QNIQNNNIIL (86 aa)) lie on the Cytoplasmic side of the membrane. The tract at residues 371–394 (KNNENNNNNDDYNDDDNEIFDDNN) is disordered. A compositionally biased stretch (acidic residues) spans 381–391 (DYNDDDNEIFD).

This sequence belongs to the P2X receptor family.

It is found in the contractile vacuole membrane. Its function is as follows. P2X receptors are ligand-gated ion channels that play a role in intracellular calcium signaling. ATP does not evoke inward currents in p2xD. Not essential for osmoregulation. In Dictyostelium discoideum (Social amoeba), this protein is P2X receptor D (p2xD).